The chain runs to 881 residues: Alanine--tRNA ligase (881 aa).

Belongs to the class-II aminoacyl-tRNA synthetase family.

Its subcellular location is the cytoplasm. The enzyme catalyses tRNA(Ala) + L-alanine + ATP = L-alanyl-tRNA(Ala) + AMP + diphosphate. Catalyzes the attachment of alanine to tRNA(Ala) in a two-step reaction: alanine is first activated by ATP to form Ala-AMP and then transferred to the acceptor end of tRNA(Ala). Also edits incorrectly charged Ser-tRNA(Ala) and Gly-tRNA(Ala) via its editing domain. The sequence is that of Alanine--tRNA ligase (alaS) from Lacticaseibacillus paracasei (strain ATCC 334 / BCRC 17002 / CCUG 31169 / CIP 107868 / KCTC 3260 / NRRL B-441) (Lactobacillus paracasei).